A 277-amino-acid polypeptide reads, in one-letter code: Large ribosomal subunit protein uL2 (277 aa).

A disordered region spans residues 223-277 (VVMNPIDHPHGGGEGRTSGGRHPVTPWGKPTKGKKTRSNKSTNKFILISRHKRKK).

This sequence belongs to the universal ribosomal protein uL2 family. In terms of assembly, part of the 50S ribosomal subunit. Forms a bridge to the 30S subunit in the 70S ribosome.

Functionally, one of the primary rRNA binding proteins. Required for association of the 30S and 50S subunits to form the 70S ribosome, for tRNA binding and peptide bond formation. It has been suggested to have peptidyltransferase activity; this is somewhat controversial. Makes several contacts with the 16S rRNA in the 70S ribosome. This chain is Large ribosomal subunit protein uL2, found in Nitrobacter hamburgensis (strain DSM 10229 / NCIMB 13809 / X14).